A 155-amino-acid chain; its full sequence is S-ribosylhomocysteine lyase (155 aa).

His57, His61, and Cys124 together coordinate Fe cation.

Belongs to the LuxS family. Homodimer. Fe cation is required as a cofactor.

It catalyses the reaction S-(5-deoxy-D-ribos-5-yl)-L-homocysteine = (S)-4,5-dihydroxypentane-2,3-dione + L-homocysteine. Involved in the synthesis of autoinducer 2 (AI-2) which is secreted by bacteria and is used to communicate both the cell density and the metabolic potential of the environment. The regulation of gene expression in response to changes in cell density is called quorum sensing. Catalyzes the transformation of S-ribosylhomocysteine (RHC) to homocysteine (HC) and 4,5-dihydroxy-2,3-pentadione (DPD). The polypeptide is S-ribosylhomocysteine lyase (Listeria monocytogenes serotype 4b (strain CLIP80459)).